Consider the following 400-residue polypeptide: Carnosine N-methyltransferase (400 aa).

The segment at 1–49 is disordered; sequence MQRRRRAPPASQPAQDSGHSEEVEVQFSAGRLGSAAPAGPPVRGTAEDE. S-adenosyl-L-methionine contacts are provided by Gln-155, Arg-158, Gly-199, Glu-220, Asp-286, Phe-287, and Cys-303. Residue Asp-307 coordinates carnosine. Tyr-315 contacts S-adenosyl-L-methionine. Positions 338 and 389 each coordinate carnosine.

It belongs to the carnosine N-methyltransferase family. As to quaternary structure, homodimer. Each monomer accommodates one molecule of carnosine in its active pocket, precisely anchoring the histidine imidazole ring such that only N1 is exposed and deprotonated for methylation. As to expression, expressed at higher level in skeletal muscle compared to other tissues.

It localises to the cytoplasm. Its subcellular location is the cytosol. It is found in the nucleus. It catalyses the reaction carnosine + S-adenosyl-L-methionine = anserine + S-adenosyl-L-homocysteine + H(+). Its function is as follows. N-methyltransferase that catalyzes the formation of anserine (beta-alanyl-N(Pi)-methyl-L-histidine) from carnosine. Anserine, a methylated derivative of carnosine (beta-alanyl-L-histidine), is an abundant constituent of vertebrate skeletal muscles. Also methylates other L-histidine-containing di- and tripeptides such as Gly-Gly-His, Gly-His and homocarnosine (GABA-His). This Rattus norvegicus (Rat) protein is Carnosine N-methyltransferase.